A 1079-amino-acid polypeptide reads, in one-letter code: Adhesion G-protein coupled receptor F3 (1079 aa).

A signal peptide spans 1–25 (MVCSAAPLLLLATTLPLLGSPVAQA). Topologically, residues 26-775 (SQPVSETGVR…EEPALALLTQ (750 aa)) are extracellular. Residues N188, N264, N301, N382, N441, and N648 are each glycosylated (N-linked (GlcNAc...) asparagine). The region spanning 599-765 (HPFAFSLPNV…SVLMSPHTVP (167 aa)) is the GAIN-B domain. Cystine bridges form between C715–C747 and C734–C749. The interval 715–765 (CVFWDHSLFQGRGGWSKEGCQAQVASASPTAQCLCQHLTAFSVLMSPHTVP) is GPS. Residues 776 to 796 (VGLGASILALLVCLGVYWLVW) traverse the membrane as a helical segment. The Cytoplasmic portion of the chain corresponds to 797-811 (RVVVRNKISYFRHAA). A helical membrane pass occupies residues 812–832 (LLNMVFCLLAADTCFLGAPFL). Residues 833–851 (SPGPRSPLCLAAAFLCHFL) are Extracellular-facing. A helical transmembrane segment spans residues 852-874 (YLATFFWMLAQALVLAHQLLFVF). At 875 to 881 (HQLAKHR) the chain is on the cytoplasmic side. A helical transmembrane segment spans residues 882-902 (VLPLMVLLGYLCPLGLAGVTL). Topologically, residues 903–928 (GLYLPQGQYLREGECWLDGKGGALYT) are extracellular. Residues 929–949 (FVGPVLAIIGVNGLVLAMAML) traverse the membrane as a helical segment. Residues 950 to 973 (KLLRPSLSEGPPAEKRQALLGVIK) lie on the Cytoplasmic side of the membrane. Residues 974 to 994 (ALLILTPIFGLTWGLGLATLL) traverse the membrane as a helical segment. Over 995-1002 (EEVSTVPH) the chain is Extracellular. Residues 1003–1023 (YIFTILNTLQGVFILLFGCLM) traverse the membrane as a helical segment. Over 1024–1079 (DRKIQEALRKRFCRAQAPSSTISLVSCCLQILSCASKSMSEGIPWPSSEDMGTARS) the chain is Cytoplasmic.

Belongs to the G-protein coupled receptor 2 family. Adhesion G-protein coupled receptor (ADGR) subfamily. In terms of assembly, heterodimer of 2 chains generated by proteolytic processing; the large extracellular N-terminal fragment and the membrane-bound C-terminal fragment predominantly remain associated and non-covalently linked. Autoproteolytically processed at the GPS region of the GAIN-B domain; this cleavage modulates receptor activity.

The protein localises to the membrane. Orphan receptor. The polypeptide is Adhesion G-protein coupled receptor F3 (ADGRF3) (Homo sapiens (Human)).